A 185-amino-acid polypeptide reads, in one-letter code: Ribosome-recycling factor (185 aa).

It belongs to the RRF family.

It localises to the cytoplasm. Its function is as follows. Responsible for the release of ribosomes from messenger RNA at the termination of protein biosynthesis. May increase the efficiency of translation by recycling ribosomes from one round of translation to another. The sequence is that of Ribosome-recycling factor from Geobacter sulfurreducens (strain ATCC 51573 / DSM 12127 / PCA).